A 298-amino-acid chain; its full sequence is Glutamate/glycine mitochondrial carrier ymc1 (298 aa).

Solcar repeat units lie at residues 14 to 98, 106 to 193, and 206 to 294; these read TKDF…CKRF, VTMP…LVKN, and TPGW…VSQH. 6 consecutive transmembrane segments (helical) span residues 17-37, 67-87, 112-132, 172-192, 212-232, and 266-287; these read FLAG…FDCV, LAAF…CVSI, YVSG…VEHV, TAAR…ALVK, CVFG…FDIV, and FYRG…TFYV.

It belongs to the mitochondrial carrier (TC 2.A.29) family.

The protein localises to the mitochondrion inner membrane. Its function is as follows. Acts as a glutamate and glycine mitochondrial transmembrane transporter. This Schizosaccharomyces pombe (strain 972 / ATCC 24843) (Fission yeast) protein is Glutamate/glycine mitochondrial carrier ymc1 (ymc1).